The following is a 652-amino-acid chain: MSERIYPIPVDIEKNALIDQDTYQKWYQKSIEDPTSFWGEHGQRIEWFKPYTKVKNASFNDNVSIKWYEDGITNVAYNCIDRHLKDRGNEIALIWESDNPYSDKKITYNELYEHVCRFANILKNHGVKKGDRVSIYLPMIPEAAYAMLACARIGAIHSVIFAGFSSEAIAGRLIDGQSTFIITADHALRGDKTIPLKDNVDRAIHIAACQNVNVTQVMVIRRTSKIIHWVNGRDFWYHEEMPHATPDCPPEHMNAEDPLFILYTSGSTGKPKGVLHTTGGYLVYASMTHQYVFDYHPGEIYWCTADIGWITGHSYLVYGPLCNGATTLMFEGSPTFPDEGRFWEIVDKHKVNIFYTAPTAIRALMGAGDSFVKRSQRTSLRLLGTVGEPINPEAWKWFYHTVGDSRCPILDTWWQTETGGHIITPLPGATKLKAGSATHPFFGIQVQLVDPQGNILKGEAEGNLCIVDSWPGQMRTLYNNHQRFVETYFSTYKGKYFTGDGCKRDKDSYYWITGRVDDILNISGHRLGTAEIESALISHPAVSEAAVVGYPHPIKGQGIYSFVTLMAGTQPSATLHQNLIQHVRQEIGSIATLDKIQFAPHLPKTRSGKIMRRILRKIAANNFDNLGDISTLAEPQIVDNLIANRQNIEEAA.

CoA is bound by residues 189-192 (RGDK) and threonine 311. ATP contacts are provided by residues 387–389 (GEP), 411–416 (DTWWQT), aspartate 500, and arginine 515. Serine 523 lines the CoA pocket. Residue arginine 526 participates in ATP binding. Mg(2+) is bound by residues histidine 539 and valine 542. Arginine 584 serves as a coordination point for CoA. Lysine 609 carries the N6-acetyllysine modification.

Belongs to the ATP-dependent AMP-binding enzyme family. Requires Mg(2+) as cofactor. Acetylated. Deacetylation by the SIR2-homolog deacetylase activates the enzyme.

It catalyses the reaction acetate + ATP + CoA = acetyl-CoA + AMP + diphosphate. Its function is as follows. Catalyzes the conversion of acetate into acetyl-CoA (AcCoA), an essential intermediate at the junction of anabolic and catabolic pathways. AcsA undergoes a two-step reaction. In the first half reaction, AcsA combines acetate with ATP to form acetyl-adenylate (AcAMP) intermediate. In the second half reaction, it can then transfer the acetyl group from AcAMP to the sulfhydryl group of CoA, forming the product AcCoA. The polypeptide is Acetyl-coenzyme A synthetase (Bartonella bacilliformis (strain ATCC 35685 / KC583 / Herrer 020/F12,63)).